Consider the following 239-residue polypeptide: Pyridoxine 5'-phosphate synthase (239 aa).

A 3-amino-2-oxopropyl phosphate-binding site is contributed by Asn-7. Asp-9 to His-10 lines the 1-deoxy-D-xylulose 5-phosphate pocket. Arg-18 is a binding site for 3-amino-2-oxopropyl phosphate. The active-site Proton acceptor is the His-43. 1-deoxy-D-xylulose 5-phosphate contacts are provided by Arg-45 and His-50. Residue Glu-70 is the Proton acceptor of the active site. Thr-100 is a 1-deoxy-D-xylulose 5-phosphate binding site. The Proton donor role is filled by His-191. 3-amino-2-oxopropyl phosphate contacts are provided by residues Gly-192 and Gly-213 to His-214.

Belongs to the PNP synthase family. In terms of assembly, homooctamer; tetramer of dimers.

The protein localises to the cytoplasm. It catalyses the reaction 3-amino-2-oxopropyl phosphate + 1-deoxy-D-xylulose 5-phosphate = pyridoxine 5'-phosphate + phosphate + 2 H2O + H(+). It participates in cofactor biosynthesis; pyridoxine 5'-phosphate biosynthesis; pyridoxine 5'-phosphate from D-erythrose 4-phosphate: step 5/5. Functionally, catalyzes the complicated ring closure reaction between the two acyclic compounds 1-deoxy-D-xylulose-5-phosphate (DXP) and 3-amino-2-oxopropyl phosphate (1-amino-acetone-3-phosphate or AAP) to form pyridoxine 5'-phosphate (PNP) and inorganic phosphate. The protein is Pyridoxine 5'-phosphate synthase of Geotalea uraniireducens (strain Rf4) (Geobacter uraniireducens).